The following is a 492-amino-acid chain: MYPFFTYSPGRHYFEYKWYNLELLRLIGSAPYGGCDAAEFLELVASLKPNDADEWHHKFLALAERTQAKGEQMSEAGHEAVARGAYLRASNYFRCAQYMFPIMPAARQGEFLKLYHRSIRSFEQAAELMEHRVERVSIPFQPPEYRAPAVELPGWLHLPAAHQRLSGRKTPLLICVGGADSTQEELYFLSAAEGPGLGYAILTFDGPGQGLTLRESGVPLRPDGEVVIEAVLDFIESYAAEHPEADLDVDAISITGQSLGGYLALRGAADPRIKACVAVDPIYDFYDLAMSRMPRWFMWPWERNYMGDGFVDFAVIEHSKLDVATKYTFAQGGQMFGSASPAQMIRDMKQYTFRLDKTITASKRHGNNRDYLEWVTCPVFVTGAAGDEKLFLPEMSTSAIMRNLANVPDEHKELWIPKEWSEGGAQAKSGAWPLLQHRCFKFLDEKLGISRGAKPVQLKTGFVKGVNGHGLTNGGLNGALNGATNGITNGVH.

The active-site Nucleophile is Ser258.

This sequence belongs to the AB hydrolase superfamily. FUS2 hydrolase family. In terms of assembly, homodimer.

Its pathway is mycotoxin biosynthesis. Its function is as follows. Alpha/beta hydrolase; part of the gene cluster that mediates the biosynthesis of UCS1025A, a member of the pyrrolizidinone family that acts as a strong telomerase inhibitor and displays potent antibacterial and antitumor properties. These compounds share a hemiaminal-containing pyrrolizidinone core fused with a gamma-lactone, giving a furopyrrolizidine that is connected to a decalin fragment. The polyketide synthase module (PKS) of the PKS-NRPS ucsA is responsible for the synthesis of the polyketide backbone via the condensation of an acetyl-CoA starter unit with 6 malonyl-CoA units. The downstream nonribosomal peptide synthetase (NRPS) module then amidates the carboxyl end of the polyketide with a 2S,3S-methylproline derived from L-isoleucine by the 2-oxoglutarate-dependent dioxygenase ucsF which converts L-isoleucine to (4S,5S)-4-methylpyrroline-5-carboxylate that is further converted to 2S,3S-methylproline by the pyrroline-5-carboxylate reductase ucsG. Reductive release of the completed aminoacyl polyketide from the assembly line can form the 3-pyrrolin-2-one structure via an intramolecular Knoevenagel reaction. Because ucsA lacks a designated enoylreductase (ER) domain, the required activity is provided the enoyl reductase ucsL. This keto acyclic precursor is the substrate of the Diels-Alderase ucsH, that catalyzes the Diels-Alder cycloaddition. Oxidation of the 3S-methyl group to a carboxylate by the cytochrome P450 monooxygenase ucsK allows an oxa-Michael cyclization that might involve the reductase/dehydrogenase ucsI and which furnishes the furopyrrolizidine. The oxidase ucsJ likely plays a critical role in stereoselective reduction of the C5-C6 double bond to afford the required R-configured carboxylate group. Further enolization and oxidation at C5 by an unidentified enzyme affords the last intermediate that can undergo oxa-Michael cyclization to yield UCS1025A. The chain is Alpha/beta hydrolase ucsC from Acremonium sp.